The chain runs to 669 residues: Glycerol uptake/efflux facilitator protein (669 aa).

Positions 1–16 are enriched in polar residues; it reads MSNPQKALNDFLSSES. Disordered regions lie at residues 1–99 and 123–147; these read MSNP…TYVP and QDIN…RGQT. At 1 to 254 the chain is on the extracellular side; the sequence is MSNPQKALND…WSSVKNTYLK (254 aa). The span at 50 to 68 shows a compositional bias: low complexity; the sequence is NNNNNNNNNNNNSNNNNNG. Over residues 72–81 the composition is skewed to acidic residues; it reads GNDDDYDYEM. 2 stretches are compositionally biased toward polar residues: residues 87-99 and 133-147; these read SPQS…TYVP and PSAS…RGQT. Ser150 carries the post-translational modification Phosphoserine. Positions 167–215 are disordered; sequence HTIPESHLSRRRSRSRATSNAGHSANTGATNGRTTGAQTNMESNESPRN. Thr168 is subject to Phosphothreonine. Positions 191 to 206 are enriched in low complexity; it reads ANTGATNGRTTGAQTN. Residues Ser209 and Ser212 each carry the phosphoserine modification. A helical transmembrane segment spans residues 255–275; the sequence is EFLAEFMGTMVMIIFGSAVVC. Over 276–325 the chain is Cytoplasmic; it reads QVNVAGKIQQDNFNVALDNLNVTGSSAETIDAMKSLTSLVSSVAGGTFDD. Residues 326 to 346 form a helical membrane-spanning segment; the sequence is VALGWAAAVVMGYFCAGGSAI. The Extracellular portion of the chain corresponds to 347–369; the sequence is SGAHLNPSITLANLVYRGFPLKK. Residues 352–354 carry the NPA 1 motif; the sequence is NPS. A helical transmembrane segment spans residues 370–390; that stretch reads VPYYFAGQLIGAFTGALILFI. The Cytoplasmic segment spans residues 391–446; sequence WYKRVLQEAYSDWWMNESVAGMFCVFPKPYLSSGRQFFSEFLCGAMLQAGTFALTD. A helical transmembrane segment spans residues 447–467; the sequence is PYTCLSSDVFPLMMFILIFII. The Extracellular segment spans residues 468-506; it reads NASMAYQTGTAMNLARDLGPRLALYAVGFDHKMLWVHHH. Residues 480-482 carry the NPA 2 motif; sequence NLA. A helical transmembrane segment spans residues 507 to 527; that stretch reads HFFWVPMVGPFIGALMGGLVY. Topologically, residues 528-669 are cytoplasmic; that stretch reads DVCIYQGHES…SHYGNAKKVT (142 aa). 2 disordered regions span residues 591–615 and 635–669; these read LQKT…VQFK and DSIE…KKVT. Positions 638 to 655 are enriched in polar residues; it reads ETASLGATTTDSIGLSDT.

Belongs to the MIP/aquaporin (TC 1.A.8) family.

Its subcellular location is the membrane. Its function is as follows. Channel protein for glycerol. Has a role in both glycerol influx and efflux. Plays a role in osmoregulation: under osmotic stress the channel is apparently closed to allow accumulation of glycerol in the cell under hyperosmotic conditions. This chain is Glycerol uptake/efflux facilitator protein (FPS1), found in Saccharomyces cerevisiae (strain ATCC 204508 / S288c) (Baker's yeast).